We begin with the raw amino-acid sequence, 524 residues long: Peptide chain release factor 3 (524 aa).

One can recognise a tr-type G domain in the interval 9 to 275 (QRRRTFAIIS…AVVELSPPPL (267 aa)). Residues 18-25 (SHPDAGKT), 86-90 (DTPGH), and 140-143 (NKLD) each bind GTP.

The protein belongs to the TRAFAC class translation factor GTPase superfamily. Classic translation factor GTPase family. PrfC subfamily.

The protein resides in the cytoplasm. Increases the formation of ribosomal termination complexes and stimulates activities of RF-1 and RF-2. It binds guanine nucleotides and has strong preference for UGA stop codons. It may interact directly with the ribosome. The stimulation of RF-1 and RF-2 is significantly reduced by GTP and GDP, but not by GMP. The chain is Peptide chain release factor 3 from Methylobacillus flagellatus (strain ATCC 51484 / DSM 6875 / VKM B-1610 / KT).